Consider the following 371-residue polypeptide: Transcriptional regulator of yeast form adherence 2 (371 aa).

The C3H1-type 1 zinc-finger motif lies at 16-44 (RNPAVLCSFYSKIGACRHGEKCSKKHLKP). The span at 94 to 107 (TVSQIDDSPHSNSG) shows a compositional bias: polar residues. The tract at residues 94-194 (TVSQIDDSPH…NIEDAKLEDT (101 aa)) is disordered. Positions 115–124 (VETQEVETEN) are enriched in acidic residues. Residues 132–194 (GDVKIDHNED…NIEDAKLEDT (63 aa)) are compositionally biased toward basic and acidic residues. The region spanning 192-279 (EDTEKDKLPE…KPVYSDLSPV (88 aa)) is the RRM domain. A C3H1-type 2 zinc finger spans residues 281 to 309 (DFNDACCEEYRDYHDCQRGAMCNYMHVRL). A disordered region spans residues 337–371 (ELPGDIRSSSSTNDDETNGNENGISSTMAVLEQLS). Over residues 355–371 (GNENGISSTMAVLEQLS) the composition is skewed to polar residues.

The protein localises to the nucleus. Functionally, transcription factor required for yeast cell adherence to silicone substrate. This Candida albicans (strain SC5314 / ATCC MYA-2876) (Yeast) protein is Transcriptional regulator of yeast form adherence 2 (TRY2).